Consider the following 362-residue polypeptide: Fructose-bisphosphate aldolase (362 aa).

Residue Asp33 coordinates dihydroxyacetone phosphate. D-glyceraldehyde 3-phosphate-binding residues include Ser35 and Thr38. Arg42 is a beta-D-fructose 1,6-bisphosphate binding site. Residue Lys106 participates in D-glyceraldehyde 3-phosphate binding. Lys145 is a dihydroxyacetone phosphate binding site. Glu188 provides a ligand contact to D-glyceraldehyde 3-phosphate. Catalysis depends on Glu188, which acts as the Proton acceptor. Dihydroxyacetone phosphate contacts are provided by Lys230, Ser272, and Gly273. Lys230 serves as the catalytic Schiff-base intermediate with dihydroxyacetone phosphate. Beta-D-fructose 1,6-bisphosphate-binding positions include 272 to 274 (SGG) and Ser300. Dihydroxyacetone phosphate contacts are provided by Gly302 and Arg303. Arg303 serves as a coordination point for beta-D-fructose 1,6-bisphosphate.

It belongs to the class I fructose-bisphosphate aldolase family. In terms of assembly, homotetramer. Interacts with TRAP (via cytoplasmic domain); the interaction prevents substrate binding and thereby inhibits aldolase activity. Interacts with MTRAP (via cytoplasmic domain); MTRAP phosphorylation may increase the binding to FBPA. Interact with RH1 (via cytoplasmic domain). Interacts with RH2b (via cytoplasmic domain). Interacts with RH4 (via cytoplasmic domain). Interacts with AMA1 (via cytoplasmic domain); the interaction is weak, however it may be increased upon AMA1 phosphorylation. Interacts with EBA140 (via cytoplasmic domain); the interaction is weak. Interacts with EBA175 (via cytoplasmic domain); the interaction is weak. Interacts with EBA181 (via cytoplasmic domain); the interaction is weak. Interacts with G-actin and F-actin. May interact with ACT2/actin II; the interaction inhibits FBPA catalytic activity. Interacts with human SLC4A1/band 3 (via N-terminus); the interaction inhibits FBPA catalytic activity.

It is found in the cytoplasm. Its subcellular location is the membrane. The protein resides in the host cell membrane. It catalyses the reaction beta-D-fructose 1,6-bisphosphate = D-glyceraldehyde 3-phosphate + dihydroxyacetone phosphate. The protein operates within carbohydrate degradation; glycolysis; D-glyceraldehyde 3-phosphate and glycerone phosphate from D-glucose: step 4/4. The cytoplasmic tail of TRAP and probably other adhesins acts as a competitive inhibitor as the binding sites of the glycolytic substrate fructose 1,6-bisphosphate and TRAP partially overlap. Inhibited by suramin, an antiparasitic drug used to treat Trypanosome-mediated infection. Plays a key role in glycolysis by catalyzing the cleavage of fructose 1,6-bisphosphate into dihydroxyacetone phosphate and glyceraldehyde 3-phosphate. Independently of its catalytic activity, connects the actin filaments, and thus the actomyosin motor, to cell surface adhesins of the thrombospondin-related anonymous protein (TRAP), the erythrocyte binding ligand (EBL) and reticulocyte binding homolog (RH) protein families; this interaction is probably involved in transducing the motor force across the parasite surface required for sporozoite and ookinete gliding motility and merozoite invasion. Stimulates actin polymerisation. The chain is Fructose-bisphosphate aldolase from Plasmodium falciparum (isolate K1 / Thailand).